A 622-amino-acid polypeptide reads, in one-letter code: Transcription factor SKN7 (622 aa).

The span at 1 to 12 (MSFSTINSNVNK) shows a compositional bias: polar residues. Residues 1–29 (MSFSTINSNVNKTTGDSNNNTTENSSTAD) form a disordered region. A compositionally biased stretch (low complexity) spans 13 to 27 (TTGDSNNNTTENSST). Positions 84-190 (ANEFVRKLFR…GLDNIKRKIP (107 aa)) are DNA-binding domain. The interval 212–303 (TNPNNPSGSL…NNFNTLCSTL (92 aa)) is hydrophobic repeat HR-A/B. The stretch at 240–260 (FGNLRRRVDKLQKELDMSKME) forms a coiled coil. Residues 378 to 492 (HVLLVEDDAV…DLHSILIRYL (115 aa)) enclose the Response regulatory domain. D427 carries the 4-aspartylphosphate modification. Disordered stretches follow at residues 501–579 (QQLP…QHHN) and 599–622 (TVPH…NQLS). The segment covering 512 to 527 (THSNTNTANSNPNTIN) has biased composition (low complexity). Over residues 537 to 554 (DNPSTTTPVTPGASISSA) the composition is skewed to polar residues. Residues 555–578 (QHVQQGQQEQQHQIFHAQQQQQHH) show a composition bias toward low complexity. Polar residues predominate over residues 600 to 622 (VPHSSMGSTPQLPQSTLQENQLS).

It belongs to the SKN7 family. Homotrimer. Post-translationally, the phosphorelay mechanism involves the sequential transfer of a phosphate group from 'His-576' (H1) to 'Asp-1144' (D1) of SLN1, then to 'His-64' (H2) of YPD1 and finally to Asp-427 (D2) of SKN7.

The protein localises to the nucleus. In terms of biological role, transcription factor that is part of a SLN1-YPD1-SKN7 two-component regulatory system, which controls gene expression in response to changes in the osmolarity of the extracellular environment. Under low osmotic conditions, phosphorylated and activated by the phosphorelay intermediate protein YPD1. Also activated in response to oxidative stress, independent on the two-component regulatory system. Regulates heat shock genes in response to oxidative stress and genes involved in cell wall integrity in response to osmotic changes. This Saccharomyces cerevisiae (strain ATCC 204508 / S288c) (Baker's yeast) protein is Transcription factor SKN7 (SKN7).